Consider the following 470-residue polypeptide: Aromatic amino acid aminotransferase C569.07 (470 aa).

The protein belongs to the class-I pyridoxal-phosphate-dependent aminotransferase family. The cofactor is pyridoxal 5'-phosphate.

Its subcellular location is the cytoplasm. It carries out the reaction an aromatic L-alpha-amino acid + 2-oxoglutarate = an aromatic oxo-acid + L-glutamate. In terms of biological role, has aromatic amino acid transaminase activity. The protein is Aromatic amino acid aminotransferase C569.07 of Schizosaccharomyces pombe (strain 972 / ATCC 24843) (Fission yeast).